A 491-amino-acid chain; its full sequence is Ketol-acid reductoisomerase (NADP(+)) (491 aa).

The KARI N-terminal Rossmann domain maps to 15 to 208 (AQLGKCRFMG…GGHRAGVLES (194 aa)). NADP(+)-binding positions include 45-48 (CGAQ), arginine 68, arginine 76, serine 78, and 108-110 (DKQ). Histidine 132 is an active-site residue. Position 158 (glycine 158) interacts with NADP(+). KARI C-terminal knotted domains are found at residues 209–344 (SFVA…TAPQ) and 345–484 (YEGK…MTDM). Aspartate 217, glutamate 221, glutamate 389, and glutamate 393 together coordinate Mg(2+). Residue serine 414 participates in substrate binding.

The protein belongs to the ketol-acid reductoisomerase family. Requires Mg(2+) as cofactor.

It catalyses the reaction (2R)-2,3-dihydroxy-3-methylbutanoate + NADP(+) = (2S)-2-acetolactate + NADPH + H(+). The enzyme catalyses (2R,3R)-2,3-dihydroxy-3-methylpentanoate + NADP(+) = (S)-2-ethyl-2-hydroxy-3-oxobutanoate + NADPH + H(+). It participates in amino-acid biosynthesis; L-isoleucine biosynthesis; L-isoleucine from 2-oxobutanoate: step 2/4. The protein operates within amino-acid biosynthesis; L-valine biosynthesis; L-valine from pyruvate: step 2/4. In terms of biological role, involved in the biosynthesis of branched-chain amino acids (BCAA). Catalyzes an alkyl-migration followed by a ketol-acid reduction of (S)-2-acetolactate (S2AL) to yield (R)-2,3-dihydroxy-isovalerate. In the isomerase reaction, S2AL is rearranged via a Mg-dependent methyl migration to produce 3-hydroxy-3-methyl-2-ketobutyrate (HMKB). In the reductase reaction, this 2-ketoacid undergoes a metal-dependent reduction by NADPH to yield (R)-2,3-dihydroxy-isovalerate. The sequence is that of Ketol-acid reductoisomerase (NADP(+)) from Salmonella typhimurium (strain LT2 / SGSC1412 / ATCC 700720).